Here is a 442-residue protein sequence, read N- to C-terminus: D-serine dehydratase (442 aa).

An N6-(pyridoxal phosphate)lysine modification is found at K118.

This sequence belongs to the serine/threonine dehydratase family. DsdA subfamily. As to quaternary structure, monomer. Pyridoxal 5'-phosphate serves as cofactor.

The catalysed reaction is D-serine = pyruvate + NH4(+). The chain is D-serine dehydratase from Escherichia coli O6:H1 (strain CFT073 / ATCC 700928 / UPEC).